The primary structure comprises 190 residues: MSIASDKLVKECEEKMVKTIEAVKEKFTAIRAGRANVSMLDGIKVENYGSEVPLNQIGTVSAPEARLLVIDPWDKTLISKIEKAILAANIGMTPNNDGRVIRLVLPELTADRRKEYVKLAKNEAENGKIAIRNIRKDINNHLKKLEKDKENPISEDELKKEETNVQTLTDKYVKEIDDLLAKKEKEITTI.

Belongs to the RRF family.

It is found in the cytoplasm. Functionally, responsible for the release of ribosomes from messenger RNA at the termination of protein biosynthesis. May increase the efficiency of translation by recycling ribosomes from one round of translation to another. The polypeptide is Ribosome-recycling factor (Fusobacterium nucleatum subsp. nucleatum (strain ATCC 25586 / DSM 15643 / BCRC 10681 / CIP 101130 / JCM 8532 / KCTC 2640 / LMG 13131 / VPI 4355)).